A 104-amino-acid polypeptide reads, in one-letter code: Phosphoribosyl-ATP pyrophosphatase (104 aa).

The protein belongs to the PRA-PH family.

The protein resides in the cytoplasm. The enzyme catalyses 1-(5-phospho-beta-D-ribosyl)-ATP + H2O = 1-(5-phospho-beta-D-ribosyl)-5'-AMP + diphosphate + H(+). It participates in amino-acid biosynthesis; L-histidine biosynthesis; L-histidine from 5-phospho-alpha-D-ribose 1-diphosphate: step 2/9. The chain is Phosphoribosyl-ATP pyrophosphatase from Methanocorpusculum labreanum (strain ATCC 43576 / DSM 4855 / Z).